Consider the following 223-residue polypeptide: MSEQTLDNNKAIVVFSGGQDSTTCLFWAKKHFESVELVTFAYGQRHDTEIEVAKQIADEQGVKHHLLDMSLLSQLTPNALTQHDLDIEVGDDGIPNTFVPARNLLFLSFAGALAYQTNAKHIITGVCETDFSGYPDCRDSFVKSMNVTLSLSMDKDFVIHTPLMWLDKKATWALSDDLGVLDYIRYNTLTCYNGVIGDGCGECPACQLRANGLNAYLAEKGVD.

15 to 25 (FSGGQDSTTCL) lines the ATP pocket. Zn(2+) contacts are provided by cysteine 191, cysteine 200, cysteine 203, and cysteine 206.

It belongs to the QueC family. In terms of assembly, homodimer. Requires Zn(2+) as cofactor.

It catalyses the reaction 7-carboxy-7-deazaguanine + NH4(+) + ATP = 7-cyano-7-deazaguanine + ADP + phosphate + H2O + H(+). The protein operates within purine metabolism; 7-cyano-7-deazaguanine biosynthesis. Its function is as follows. Catalyzes the ATP-dependent conversion of 7-carboxy-7-deazaguanine (CDG) to 7-cyano-7-deazaguanine (preQ(0)). The chain is 7-cyano-7-deazaguanine synthase from Staphylococcus saprophyticus subsp. saprophyticus (strain ATCC 15305 / DSM 20229 / NCIMB 8711 / NCTC 7292 / S-41).